Here is a 367-residue protein sequence, read N- to C-terminus: MTSTPRTLMVMAGGTGGHVFPGLAVAHRMQAQGWRVVWLGNPAGMEATLVPKHGIPMEYVRFGGLRGKGLATKLALPFNLLRACAQSLRALRRVKPDVVLGMGGYITFPAGLVTVLTGRPLVLHEQNSIAGLTNKVLAKLAKRVLVAFPGALPNAEWTGNPIRAELARTEPPQARYAARSGKLKLLVVGGSLGAAALNEVVPRALALLAPSERPQVVHQAGAKHIDVLKENYEAAGLACGSDVELVPFIDDMASAYASADLVICRSGAMTVAEIAAVGVAALFVPFPHAVDDHQTTNAEFLAEQGAAVLVQQRDLSAELLADWLRGQSRESLAAMAERSRSLAKPDATDEVARVCAAVAGANLEGKQ.

UDP-N-acetyl-alpha-D-glucosamine is bound by residues 15-17 (TGG), Asn-127, Arg-163, Ser-191, Ile-249, and Gln-294.

Belongs to the glycosyltransferase 28 family. MurG subfamily.

Its subcellular location is the cell inner membrane. It catalyses the reaction di-trans,octa-cis-undecaprenyl diphospho-N-acetyl-alpha-D-muramoyl-L-alanyl-D-glutamyl-meso-2,6-diaminopimeloyl-D-alanyl-D-alanine + UDP-N-acetyl-alpha-D-glucosamine = di-trans,octa-cis-undecaprenyl diphospho-[N-acetyl-alpha-D-glucosaminyl-(1-&gt;4)]-N-acetyl-alpha-D-muramoyl-L-alanyl-D-glutamyl-meso-2,6-diaminopimeloyl-D-alanyl-D-alanine + UDP + H(+). The protein operates within cell wall biogenesis; peptidoglycan biosynthesis. Cell wall formation. Catalyzes the transfer of a GlcNAc subunit on undecaprenyl-pyrophosphoryl-MurNAc-pentapeptide (lipid intermediate I) to form undecaprenyl-pyrophosphoryl-MurNAc-(pentapeptide)GlcNAc (lipid intermediate II). The protein is UDP-N-acetylglucosamine--N-acetylmuramyl-(pentapeptide) pyrophosphoryl-undecaprenol N-acetylglucosamine transferase of Burkholderia thailandensis (strain ATCC 700388 / DSM 13276 / CCUG 48851 / CIP 106301 / E264).